The sequence spans 173 residues: Large ribosomal subunit protein uL10 (173 aa).

This sequence belongs to the universal ribosomal protein uL10 family. In terms of assembly, part of the ribosomal stalk of the 50S ribosomal subunit. The N-terminus interacts with L11 and the large rRNA to form the base of the stalk. The C-terminus forms an elongated spine to which L12 dimers bind in a sequential fashion forming a multimeric L10(L12)X complex.

Its function is as follows. Forms part of the ribosomal stalk, playing a central role in the interaction of the ribosome with GTP-bound translation factors. In Chlorobium phaeobacteroides (strain BS1), this protein is Large ribosomal subunit protein uL10.